The following is a 654-amino-acid chain: Periplasmic beta-glucosidase/beta-xylosidase (654 aa).

A signal peptide spans Met-1–Ala-25. Catalysis depends on residues Asp-235 and Asp-360.

It belongs to the glycosyl hydrolase 3 family.

It localises to the periplasm. The enzyme catalyses Hydrolysis of terminal, non-reducing beta-D-glucosyl residues with release of beta-D-glucose.. It catalyses the reaction Hydrolysis of (1-&gt;4)-beta-D-xylans, to remove successive D-xylose residues from the non-reducing termini.. Exhibits both beta-glucosidase and beta-xylosidase activities. The sequence is that of Periplasmic beta-glucosidase/beta-xylosidase (bgxA) from Dickeya chrysanthemi (Pectobacterium chrysanthemi).